The sequence spans 267 residues: Glucosamine-6-phosphate deaminase (267 aa).

The Proton acceptor; for enolization step role is filled by aspartate 72. Aspartate 141 serves as the catalytic For ring-opening step. Histidine 143 acts as the Proton acceptor; for ring-opening step in catalysis. Glutamate 148 functions as the For ring-opening step in the catalytic mechanism.

It belongs to the glucosamine/galactosamine-6-phosphate isomerase family. NagB subfamily. Homohexamer.

It catalyses the reaction alpha-D-glucosamine 6-phosphate + H2O = beta-D-fructose 6-phosphate + NH4(+). Its pathway is amino-sugar metabolism; N-acetylneuraminate degradation; D-fructose 6-phosphate from N-acetylneuraminate: step 5/5. Its activity is regulated as follows. Allosterically activated by N-acetylglucosamine 6-phosphate (GlcNAc6P). In terms of biological role, catalyzes the reversible isomerization-deamination of glucosamine 6-phosphate (GlcN6P) to form fructose 6-phosphate (Fru6P) and ammonium ion. The sequence is that of Glucosamine-6-phosphate deaminase from Actinobacillus pleuropneumoniae serotype 3 (strain JL03).